We begin with the raw amino-acid sequence, 403 residues long: tRNA pseudouridine synthase D (403 aa).

The segment covering 1–10 has biased composition (basic and acidic residues); sequence MTVQVQDHDI. Residues 1–24 form a disordered region; sequence MTVQVQDHDITTAADTAKLPQPMQ. Asp92 acts as the Nucleophile in catalysis. A TRUD domain is found at 192-354; it reads GVPNYFGPQR…IKAQRRALRL (163 aa). The segment at 217-240 is disordered; it reads ARPVPESRPQPNKGKRKRVPREQN.

This sequence belongs to the pseudouridine synthase TruD family.

The enzyme catalyses uridine(13) in tRNA = pseudouridine(13) in tRNA. In terms of biological role, responsible for synthesis of pseudouridine from uracil-13 in transfer RNAs. This Psychrobacter arcticus (strain DSM 17307 / VKM B-2377 / 273-4) protein is tRNA pseudouridine synthase D.